We begin with the raw amino-acid sequence, 867 residues long: Inactive tyrosine-protein kinase kin-32 (867 aa).

Residues 3–327 (GLARVFLIGG…GYQMLYNQRD (325 aa)) form the FERM domain. The 265-residue stretch at 367–631 (ITLKELIGGG…IIEDVRQQII (265 aa)) folds into the Protein kinase domain. ATP-binding positions include 373–381 (IGGGQFGNV) and Lys400. A coiled-coil region spans residues 662–691 (TLYRTMEDQKRQAEEDAKWLEQEDDEDEDD). A disordered region spans residues 674–729 (AEEDAKWLEQEDDEDEDDQDIDQIPSTSHSSVENIRTSNGYLHHTPTSTRSLRFED). Over residues 683–694 (QEDDEDEDDQDI) the composition is skewed to acidic residues. Residues 698–724 (PSTSHSSVENIRTSNGYLHHTPTSTRS) show a composition bias toward polar residues.

The protein belongs to the protein kinase superfamily. Tyr protein kinase family. FAK subfamily. As to expression, expressed in body wall muscles and some neurons in the head.

In terms of biological role, has apparently no tyrosine kinase activity in vitro when expressed in mammalian cells. This chain is Inactive tyrosine-protein kinase kin-32, found in Caenorhabditis elegans.